Reading from the N-terminus, the 259-residue chain is Phosphatidylserine decarboxylase proenzyme (259 aa).

The active-site Schiff-base intermediate with substrate; via pyruvic acid is Ser183. Ser183 carries the pyruvic acid (Ser); by autocatalysis modification.

It belongs to the phosphatidylserine decarboxylase family. PSD-A subfamily. As to quaternary structure, heterodimer of a large membrane-associated beta subunit and a small pyruvoyl-containing alpha subunit. Pyruvate serves as cofactor. Is synthesized initially as an inactive proenzyme. Formation of the active enzyme involves a self-maturation process in which the active site pyruvoyl group is generated from an internal serine residue via an autocatalytic post-translational modification. Two non-identical subunits are generated from the proenzyme in this reaction, and the pyruvate is formed at the N-terminus of the alpha chain, which is derived from the carboxyl end of the proenzyme. The post-translation cleavage follows an unusual pathway, termed non-hydrolytic serinolysis, in which the side chain hydroxyl group of the serine supplies its oxygen atom to form the C-terminus of the beta chain, while the remainder of the serine residue undergoes an oxidative deamination to produce ammonia and the pyruvoyl prosthetic group on the alpha chain.

The protein resides in the cell membrane. The enzyme catalyses a 1,2-diacyl-sn-glycero-3-phospho-L-serine + H(+) = a 1,2-diacyl-sn-glycero-3-phosphoethanolamine + CO2. It functions in the pathway phospholipid metabolism; phosphatidylethanolamine biosynthesis; phosphatidylethanolamine from CDP-diacylglycerol: step 2/2. Catalyzes the formation of phosphatidylethanolamine (PtdEtn) from phosphatidylserine (PtdSer). This chain is Phosphatidylserine decarboxylase proenzyme, found in Neisseria gonorrhoeae (strain NCCP11945).